The following is a 314-amino-acid chain: L-lactate dehydrogenase 2 (314 aa).

NAD(+)-binding positions include Val16, Asp37, Lys42, Tyr68, and 82-83; that span reads GL. Substrate is bound by residues Gln85, Arg91, and 123–126; that span reads NPVD. NAD(+) is bound by residues 121–123 and Ser146; that span reads ATN. A substrate-binding site is contributed by 151–154; it reads DSAR. The beta-D-fructose 1,6-bisphosphate site is built by Arg156 and His171. His178 serves as the catalytic Proton acceptor. Tyr223 bears the Phosphotyrosine mark. Residue Thr232 coordinates substrate.

The protein belongs to the LDH/MDH superfamily. LDH family. Homotetramer.

The protein resides in the cytoplasm. It carries out the reaction (S)-lactate + NAD(+) = pyruvate + NADH + H(+). It functions in the pathway fermentation; pyruvate fermentation to lactate; (S)-lactate from pyruvate: step 1/1. Its activity is regulated as follows. Allosterically activated by fructose 1,6-bisphosphate (FBP). Its function is as follows. Catalyzes the conversion of lactate to pyruvate. The protein is L-lactate dehydrogenase 2 of Bacillus anthracis.